The sequence spans 328 residues: C-type lectin domain family 11 member A (328 aa).

Positions 1 to 21 (MQAAWLLGALLVPHLLSFGHG) are cleaved as a signal peptide. Residues 58–111 (PTGVGNKDNLAENSEGKEVWEATETQGEEEEEETTTTPSSSPTPFPSPSPTSED) are disordered. Positions 188–325 (LGHKCFLLSR…CERRLYFVCE (138 aa)) constitute a C-type lectin domain. Cystine bridges form between Cys-209–Cys-324 and Cys-301–Cys-316.

O-glycosylated. Probably sulfated on the O-glycans.

Its subcellular location is the cytoplasm. The protein resides in the secreted. Its function is as follows. Promotes osteogenesis by stimulating the differentiation of mesenchymal progenitors into mature osteoblasts. Important for repair and maintenance of adult bone. This chain is C-type lectin domain family 11 member A (Clec11a), found in Rattus norvegicus (Rat).